A 1000-amino-acid chain; its full sequence is Vacuolar sorting protein 39 (1000 aa).

In terms of domain architecture, CNH spans 16–282 (PARIDAVESY…RRLVKSNNAV (267 aa)). The tract at residues 394–413 (DEASLSRGSSGISDDMESSS) is disordered. Residues 607–796 (YSMLVLESCP…YLNPKKSAKD (190 aa)) form a CHCR repeat. The segment at 844–864 (GLSSSTDSGRSDVDTEEPLEE) is disordered.

The protein belongs to the VAM6/VPS39 family. Homooligomer. Component of the homotypic fusion and vacuole protein sorting (HOPS) complex composed of the class C Vps core proteins VPS11, VCL1, VPS18 and VPS33, which in HOPS further associates with VPS39 and VPS41. Interacts directly with VPS11. Binds to RABG3B.

The protein localises to the cytoplasm. It is found in the vacuole membrane. Functionally, essential protein required during embryogenesis. Believed to act in part as a component of the putative HOPS endosomal tethering complex. HOPS is required for the central vacuole formation. May play a role in clustering and fusion of late endosomes and lysosomes. Plays a role in vesicle-mediated protein trafficking to lysosomal compartments including the endocytic membrane transport and autophagic pathways. Required for fusion of endosomes and autophagosomes with lysosomes. The sequence is that of Vacuolar sorting protein 39 from Arabidopsis thaliana (Mouse-ear cress).